The following is a 386-amino-acid chain: Queuine tRNA-ribosyltransferase (386 aa).

Aspartate 99 functions as the Proton acceptor in the catalytic mechanism. Residues 99-103 (DSGGF), aspartate 153, glutamine 198, and glycine 225 contribute to the substrate site. The interval 256–262 (GVGKPED) is RNA binding. The active-site Nucleophile is aspartate 275. Residues 280–284 (TRNAR) form an RNA binding; important for wobble base 34 recognition region. 4 residues coordinate Zn(2+): cysteine 313, cysteine 315, cysteine 318, and histidine 344.

The protein belongs to the queuine tRNA-ribosyltransferase family. In terms of assembly, homodimer. Within each dimer, one monomer is responsible for RNA recognition and catalysis, while the other monomer binds to the replacement base PreQ1. Zn(2+) serves as cofactor.

It carries out the reaction 7-aminomethyl-7-carbaguanine + guanosine(34) in tRNA = 7-aminomethyl-7-carbaguanosine(34) in tRNA + guanine. Its pathway is tRNA modification; tRNA-queuosine biosynthesis. Functionally, catalyzes the base-exchange of a guanine (G) residue with the queuine precursor 7-aminomethyl-7-deazaguanine (PreQ1) at position 34 (anticodon wobble position) in tRNAs with GU(N) anticodons (tRNA-Asp, -Asn, -His and -Tyr). Catalysis occurs through a double-displacement mechanism. The nucleophile active site attacks the C1' of nucleotide 34 to detach the guanine base from the RNA, forming a covalent enzyme-RNA intermediate. The proton acceptor active site deprotonates the incoming PreQ1, allowing a nucleophilic attack on the C1' of the ribose to form the product. After dissociation, two additional enzymatic reactions on the tRNA convert PreQ1 to queuine (Q), resulting in the hypermodified nucleoside queuosine (7-(((4,5-cis-dihydroxy-2-cyclopenten-1-yl)amino)methyl)-7-deazaguanosine). The chain is Queuine tRNA-ribosyltransferase from Acinetobacter baylyi (strain ATCC 33305 / BD413 / ADP1).